Reading from the N-terminus, the 232-residue chain is CD302 antigen (232 aa).

Positions 1–22 (MPRAAPPALLLPLLGLAAAAAA) are cleaved as a signal peptide. Residues 23–168 (DCPSSTWVQF…YEKKYLSDNR (146 aa)) are Extracellular-facing. A C-type lectin domain is found at 32 to 152 (FQDSCYIFLQ…CEVSSVEGTL (121 aa)). N109 is a glycosylation site (N-linked (GlcNAc...) asparagine). Residues C128 and C143 are joined by a disulfide bond. Residues 169 to 189 (ILISALVIASTVILTVLGAVV) traverse the membrane as a helical segment. Over 190-232 (WFLYKRSLDSGFTTVFSAAHQSPYNDDCVLVVAEENEYDIQFN) the chain is Cytoplasmic.

It localises to the membrane. The protein localises to the cell projection. Its subcellular location is the filopodium. The protein resides in the cytoplasm. It is found in the cell cortex. It localises to the microvillus. Its function is as follows. Potential multifunctional C-type lectin receptor that may play roles in endocytosis and phagocytosis as well as in cell adhesion and migration. The sequence is that of CD302 antigen from Bos taurus (Bovine).